A 393-amino-acid polypeptide reads, in one-letter code: 1-deoxy-D-xylulose 5-phosphate reductoisomerase (393 aa).

Residues Thr-10, Gly-11, Ser-12, Ile-13, Arg-37, and Asn-124 each coordinate NADPH. Lys-125 serves as a coordination point for 1-deoxy-D-xylulose 5-phosphate. Glu-126 is a binding site for NADPH. Residue Asp-150 participates in Mn(2+) binding. Residues Ser-151, Glu-152, Ser-182, and His-205 each coordinate 1-deoxy-D-xylulose 5-phosphate. Position 152 (Glu-152) interacts with Mn(2+). Position 211 (Gly-211) interacts with NADPH. Residues Ser-218, Asn-223, Lys-224, and Glu-227 each coordinate 1-deoxy-D-xylulose 5-phosphate. Glu-227 lines the Mn(2+) pocket.

This sequence belongs to the DXR family. Mg(2+) is required as a cofactor. It depends on Mn(2+) as a cofactor.

It carries out the reaction 2-C-methyl-D-erythritol 4-phosphate + NADP(+) = 1-deoxy-D-xylulose 5-phosphate + NADPH + H(+). It participates in isoprenoid biosynthesis; isopentenyl diphosphate biosynthesis via DXP pathway; isopentenyl diphosphate from 1-deoxy-D-xylulose 5-phosphate: step 1/6. Its function is as follows. Catalyzes the NADPH-dependent rearrangement and reduction of 1-deoxy-D-xylulose-5-phosphate (DXP) to 2-C-methyl-D-erythritol 4-phosphate (MEP). This Nitrosococcus oceani (strain ATCC 19707 / BCRC 17464 / JCM 30415 / NCIMB 11848 / C-107) protein is 1-deoxy-D-xylulose 5-phosphate reductoisomerase.